The following is a 202-amino-acid chain: CASP-like protein 1E1 (202 aa).

At 1-33 (MESQCRPNVDGVHNGVESHVKVVEKPRSVGSSS) the chain is on the cytoplasmic side. Residues 34–54 (EFVLRILGLLLTLIAAVVAGV) form a helical membrane-spanning segment. Residues 55–85 (DKQTKIIPLTLIKTLPSLHVPVTAKWSDMSA) lie on the Extracellular side of the membrane. A helical transmembrane segment spans residues 86–106 (FVYLVVSNAIACSYAAISLVL). Over 107–118 (VTMLGRRGKGGR) the chain is Cytoplasmic. A helical membrane pass occupies residues 119 to 139 (VLAVIVLDLHMVGLLFSANGA). Residues 140–172 (ATAVGVLGQYGNSHVEWKKVCNVFDSFCHHLVA) are Extracellular-facing. The helical transmembrane segment at 173 to 193 (SLALSFLGSLSFLGLVLLAIL) threads the bilayer. Over 194–202 (NLHKKSSTK) the chain is Cytoplasmic.

The protein belongs to the Casparian strip membrane proteins (CASP) family. Homodimer and heterodimers.

It localises to the cell membrane. The protein is CASP-like protein 1E1 of Vitis vinifera (Grape).